The primary structure comprises 169 residues: Protein pid-1 (169 aa).

Residues 137–151 (SGSPRITPQKHTPVS) show a composition bias toward polar residues. Residues 137–169 (SGSPRITPQKHTPVSANHKPARSIFDDIPSNIA) are disordered.

In terms of assembly, component of the pid-1 variant of the PETISCO complex (also called the pid-3, erh-2, tofu-6, and ife-3 small RNA complex) containing at least pid-1, tofu-6, ife-3, pid-3, and erh-2, which is required for the biogenesis of a class of 21 nucleotide PIWI-interacting RNAs (piRNAs) that possess a uracil residue at the 5'-end (also called 21U-RNAs). Within the complex interacts with pid-3; the interaction is direct. Within the complex interacts with erh-2. Within the complex interacts with tofu-6. As to expression, expressed predominantly in the germline (at protein level).

The protein localises to the cytoplasm. It is found in the nucleus. Its subcellular location is the perinuclear region. Functionally, component of the pid-1 variant of the PETISCO complex which is required for the biogenesis of a class of 21 nucleotide PIWI-interacting RNAs (piRNAs) that possess a uracil residue at the 5'-end (also called 21U-RNAs). Within the complex acts as an adapter which binds to the complex via erh-2. Involved in the biogenesis of 21U-RNAs which guide the piwi protein prg-1 to its DNA targets for silencing. Plays a role in small RNA-directed transgenerational epigenetic inheritance. In Caenorhabditis elegans, this protein is Protein pid-1.